Reading from the N-terminus, the 233-residue chain is Ribonuclease HII (233 aa).

An RNase H type-2 domain is found at 21–211 (KVIAGVDEVG…LDALPQWRHL (191 aa)). A divalent metal cation-binding residues include aspartate 27, glutamate 28, and aspartate 119.

Belongs to the RNase HII family. The cofactor is Mn(2+). Mg(2+) serves as cofactor.

The protein resides in the cytoplasm. The enzyme catalyses Endonucleolytic cleavage to 5'-phosphomonoester.. Its function is as follows. Endonuclease that specifically degrades the RNA of RNA-DNA hybrids. This is Ribonuclease HII from Streptomyces avermitilis (strain ATCC 31267 / DSM 46492 / JCM 5070 / NBRC 14893 / NCIMB 12804 / NRRL 8165 / MA-4680).